A 132-amino-acid chain; its full sequence is Small ribosomal subunit protein eS17B (132 aa).

Ser-43 carries the phosphoserine modification.

The protein belongs to the eukaryotic ribosomal protein eS17 family. In terms of assembly, component of the small ribosomal subunit (SSU). Mature yeast ribosomes consist of a small (40S) and a large (60S) subunit. The 40S small subunit contains 1 molecule of ribosomal RNA (18S rRNA) and at least 33 different proteins. The large 60S subunit contains 3 rRNA molecules (25S, 5.8S and 5S rRNA) and at least 46 different proteins.

It is found in the cytoplasm. Component of the ribosome, a large ribonucleoprotein complex responsible for the synthesis of proteins in the cell. The small ribosomal subunit (SSU) binds messenger RNAs (mRNAs) and translates the encoded message by selecting cognate aminoacyl-transfer RNA (tRNA) molecules. The large subunit (LSU) contains the ribosomal catalytic site termed the peptidyl transferase center (PTC), which catalyzes the formation of peptide bonds, thereby polymerizing the amino acids delivered by tRNAs into a polypeptide chain. The nascent polypeptides leave the ribosome through a tunnel in the LSU and interact with protein factors that function in enzymatic processing, targeting, and the membrane insertion of nascent chains at the exit of the ribosomal tunnel. The polypeptide is Small ribosomal subunit protein eS17B (rps1702) (Schizosaccharomyces pombe (strain 972 / ATCC 24843) (Fission yeast)).